A 313-amino-acid polypeptide reads, in one-letter code: Ribosomal RNA small subunit methyltransferase H (313 aa).

S-adenosyl-L-methionine is bound by residues 35–37 (GGH), Asp-55, Phe-81, Asp-103, and Gln-110.

Belongs to the methyltransferase superfamily. RsmH family.

The protein resides in the cytoplasm. It carries out the reaction cytidine(1402) in 16S rRNA + S-adenosyl-L-methionine = N(4)-methylcytidine(1402) in 16S rRNA + S-adenosyl-L-homocysteine + H(+). Specifically methylates the N4 position of cytidine in position 1402 (C1402) of 16S rRNA. This is Ribosomal RNA small subunit methyltransferase H from Pseudomonas aeruginosa (strain LESB58).